The chain runs to 326 residues: Porphobilinogen deaminase (326 aa).

At Cys251 the chain carries S-(dipyrrolylmethanemethyl)cysteine.

The protein belongs to the HMBS family. Requires dipyrromethane as cofactor.

It catalyses the reaction 4 porphobilinogen + H2O = hydroxymethylbilane + 4 NH4(+). Its pathway is porphyrin-containing compound metabolism; protoporphyrin-IX biosynthesis; coproporphyrinogen-III from 5-aminolevulinate: step 2/4. Tetrapolymerization of the monopyrrole PBG into the hydroxymethylbilane pre-uroporphyrinogen in several discrete steps. This Eremothecium gossypii (strain ATCC 10895 / CBS 109.51 / FGSC 9923 / NRRL Y-1056) (Yeast) protein is Porphobilinogen deaminase (HEM3).